We begin with the raw amino-acid sequence, 554 residues long: Apyrase (554 aa).

The signal sequence occupies residues Met-1 to Ser-21. A divalent metal cation contacts are provided by Asp-43, His-45, Asp-92, Asn-124, His-224, and His-248. Positions 358, 394, 399, 418, 504, and 510 each coordinate AMP.

This sequence belongs to the 5'-nucleotidase family. It depends on a divalent metal cation as a cofactor. In terms of tissue distribution, salivary gland (at protein level).

Its subcellular location is the secreted. It carries out the reaction a ribonucleoside 5'-triphosphate + 2 H2O = a ribonucleoside 5'-phosphate + 2 phosphate + 2 H(+). In terms of biological role, facilitates hematophagy by inhibiting ADP-dependent platelet aggregation in the host. Cleaves adenosine triphosphate (ATP) and adenosine diphosphate (ADP) to adenosine monophosphate (AMP) and inorganic phosphate. Shows potential for antithrombotic activity. Can induce basophil activation. May reduce probing time by facilitating the speed of locating blood. The sequence is that of Apyrase from Tabanus yao (Horsefly).